Reading from the N-terminus, the 245-residue chain is Polynucleotide 3'-phosphatase (245 aa).

The protein belongs to the DNA 3' phosphatase family.

The protein localises to the nucleus. The enzyme catalyses a 3'end (2'-deoxyribonucleotide 3'-phosphate)-DNA + H2O = a 3'-end 2'-deoxyribonucleotide-DNA + phosphate. Functionally, dephosphorylate DNA's 3'-phosphate termini. Has a role in the repair of breaks in single-stranded DNA. This Saccharomyces mikatae (Yeast) protein is Polynucleotide 3'-phosphatase (TPP1).